The following is a 566-amino-acid chain: Putative ABC transporter ATP-binding protein BT9727_2424 (566 aa).

ABC transporter domains are found at residues 5-246 (ISFE…GLRE) and 300-533 (LKVE…ANLK). Residues 39–46 (GRSGSGKS) and 333–340 (GHNGAGKS) each bind ATP.

The protein belongs to the ABC transporter superfamily.

Its subcellular location is the cell membrane. Probably part of an ABC transporter complex. Responsible for energy coupling to the transport system. The protein is Putative ABC transporter ATP-binding protein BT9727_2424 of Bacillus thuringiensis subsp. konkukian (strain 97-27).